The following is a 927-amino-acid chain: F-box only protein 11 (927 aa).

The segment at 1-132 (MNSVRAANRR…STSTTENFGH (132 aa)) is disordered. Over residues 7 to 16 (ANRRPRRVSR) the composition is skewed to basic residues. Residues 17-27 (PRPVQQQQQQP) are compositionally biased toward low complexity. The segment covering 28–68 (PQQPPPQPPQQQPPQQQPPPPPQQQQQQQPPPPPPPPPPLP) has biased composition (pro residues). The span at 114–129 (PTKNSMEGASTSTTEN) shows a compositional bias: polar residues. Positions 153–199 (QYLQEKLPDEVVLKIFSYLLEQDLCRAACVCKRFSELANDPILWKRL) constitute an F-box domain. 19 PbH1 repeats span residues 395 to 417 (GACP…YITD), 418 to 440 (HAQG…WVKN), 441 to 463 (HGNP…FTFD), 464 to 486 (HGMG…EVKA), 487 to 509 (YANP…YVHE), 510 to 532 (KGRG…WITS), 533 to 555 (NSDP…YIFG), 556 to 578 (DGRG…QIRT), 579 to 601 (NSCP…YVHE), 602 to 624 (KGQG…WVTT), 625 to 647 (GSTP…YFYD), 648 to 670 (NGHG…QIRT), 671 to 693 (GSNP…LVYN), 694 to 716 (SGLG…WIKT), 717 to 739 (DSNP…CIFN), 740 to 762 (GGRG…LIST), 763 to 785 (NSHP…EITN), 786 to 808 (HATA…FLAS), and 809 to 830 (GVNV…EKAV). A UBR-type zinc finger spans residues 833-904 (GQCLYKISSY…LSNPCTLAGE (72 aa)).

Component of the SCF(FBXO11) complex consisting of CUL1, RBX1, SKP1 and FBXO11. Interacts with CIITA. In terms of tissue distribution, isoform 5 is expressed in keratinocytes, fibroblasts and melanocytes.

Its subcellular location is the nucleus. It localises to the chromosome. It participates in protein modification; protein ubiquitination. Substrate recognition component of a SCF (SKP1-CUL1-F-box protein) E3 ubiquitin-protein ligase complex which mediates the ubiquitination and subsequent proteasomal degradation of target proteins, such as DTL/CDT2, BCL6, SNAI1 and PRDM1/BLIMP1. The SCF(FBXO11) complex mediates ubiquitination and degradation of BCL6, thereby playing a role in the germinal center B-cells terminal differentiation toward memory B-cells and plasma cells. The SCF(FBXO11) complex also mediates ubiquitination and degradation of DTL, an important step for the regulation of TGF-beta signaling, cell migration and the timing of the cell-cycle progression and exit. The SCF(FBXO11) complex also catalyzes ubiquitination and degradation of GSK3B-phosphorylated SNAI1. Binds to and neddylates phosphorylated p53/TP53, inhibiting its transcriptional activity. Plays a role in the regulatiom of erythropoiesis but not myelopoiesis or megakaryopoiesis. Mechanistically, activates erythroid genes by mediating the degradation of BAHD1, a heterochromatin-associated protein that recruits corepressors to H3K27me3 marks. Participates in macrophage cell death and inflammation in response to bacterial toxins by regulating the expression of complement 5a receptor 1/C5AR1 and IL-1beta. Acts as a critical regulator to determine the level of MHC-II by mediating the recognition of degron at the P/S/T domain of CIITA leading to its ubiquitination and subsequent degradation via the proteasome. Participates in the antiviral repsonse by initiating the activation of TBK1-IRF3-IFN-I axis. Mediates the 'Lys-63'-linked ubiquitination of TRAF3 to strengthen the interaction between TRAF3 and TBK1. This chain is F-box only protein 11, found in Homo sapiens (Human).